Here is a 674-residue protein sequence, read N- to C-terminus: MSSLISFNFLFLFSFLTSSFTASAQDPFYLNHYCPNTTTYSSNSTYSTNLRTLLSSLSSRNASYSTGFQNATAGKAPDRVTGLFLCRGDVSPEVCRNCVAFSVNQTLNLCPKVREAVFYYEQCILRYSHKNILSTAITNEGEFILSNTNTISPNQKQIDGFTSFVSSTMSEAAGKAANSSRKLYTVNTELTAYQNLYGLLQCTPDLTRADCLSCLQSSINGMALSRIGARLYWPSCTARYELYPFYNESAIETPPLPPPPPPPPPRESLVSTPPISSSSLPGKSGNSTVLVVAVVVLAVLLFIALVGYCFLAKKKKKTFDTASASEVGDDMATADSLQLDYRTIQTATNDFAESNKIGRGGFGEVYKGTFSNGKEVAVKRLSKNSRQGEAEFKTEVVVVAKLQHRNLVRLLGFSLQGEERILVYEYMPNKSLDCLLFDPTKQIQLDWMQRYNIIGGIARGILYLHQDSRLTIIHRDLKASNILLDADINPKIADFGMARIFGLDQTQDNTSRIVGTYGYMAPEYAMHGQFSMKSDVYSFGVLVLEIISGRKNSSFGESDGAQDLLTHAWRLWTNKKALDLVDPLIAENCQNSEVVRCIHIGLLCVQEDPAKRPAISTVFMMLTSNTVTLPVPRQPGFFIQCRAVKDPLDSDQSTTTKSFPASIDDESITDLYPR.

The N-terminal stretch at 1-24 (MSSLISFNFLFLFSFLTSSFTASA) is a signal peptide. The Extracellular segment spans residues 25 to 289 (QDPFYLNHYC…LPGKSGNSTV (265 aa)). 2 consecutive Gnk2-homologous domains span residues 28-132 (FYLN…HKNI) and 139-245 (NEGE…LYPF). 7 N-linked (GlcNAc...) asparagine glycosylation sites follow: asparagine 36, asparagine 43, asparagine 61, asparagine 70, asparagine 104, asparagine 178, and asparagine 247. The span at 254–266 (PPLPPPPPPPPPR) shows a compositional bias: pro residues. The tract at residues 254-284 (PPLPPPPPPPPPRESLVSTPPISSSSLPGKS) is disordered. Over residues 268–284 (SLVSTPPISSSSLPGKS) the composition is skewed to low complexity. Residue asparagine 286 is glycosylated (N-linked (GlcNAc...) asparagine). Residues 290–310 (LVVAVVVLAVLLFIALVGYCF) form a helical membrane-spanning segment. At 311-674 (LAKKKKKTFD…DESITDLYPR (364 aa)) the chain is on the cytoplasmic side. Positions 351 to 637 (FAESNKIGRG…TLPVPRQPGF (287 aa)) constitute a Protein kinase domain. ATP contacts are provided by residues 357-365 (IGRGGFGEV) and lysine 379. At tyrosine 424 the chain carries Phosphotyrosine. Aspartate 476 serves as the catalytic Proton acceptor. Serine 480 is modified (phosphoserine). Threonine 516 bears the Phosphothreonine mark. Tyrosine 524 is subject to Phosphotyrosine. The interval 648-674 (LDSDQSTTTKSFPASIDDESITDLYPR) is disordered. Residues 650-659 (SDQSTTTKSF) show a composition bias toward polar residues.

The protein belongs to the protein kinase superfamily. Ser/Thr protein kinase family. CRK subfamily.

It is found in the membrane. The catalysed reaction is L-seryl-[protein] + ATP = O-phospho-L-seryl-[protein] + ADP + H(+). It carries out the reaction L-threonyl-[protein] + ATP = O-phospho-L-threonyl-[protein] + ADP + H(+). The protein is Cysteine-rich receptor-like protein kinase 6 (CRK6) of Arabidopsis thaliana (Mouse-ear cress).